The following is a 180-amino-acid chain: Stathmin-3 (180 aa).

S-palmitoyl cysteine attachment occurs at residues C22 and C24. An SLD domain is found at 38 to 180 (GDMEVKQLDK…NKEQREEMSG (143 aa)). Residues S50, S60, S65, S68, S72, S73, and S81 each carry the phosphoserine modification. The tract at residues 58–82 (LKSPSDLSPESPMLSSPPKRKDTSL) is disordered. Low complexity predominate over residues 60 to 74 (SPSDLSPESPMLSSP). A coiled-coil region spans residues 76–179 (KRKDTSLEEL…RNKEQREEMS (104 aa)).

The protein belongs to the stathmin family. In terms of assembly, interacts with STAT3. Interacts with CLU (secreted form); this interaction may act as an important modulator during neuronal differentiation. In terms of processing, N-terminal palmitoylation promotes specific anchoring to the cytosolic leaflet of Golgi membranes and subsequent vesicular trafficking along dendrites and axons. Neuronal Stathmins are substrates for palmitoyltransferases ZDHHC3, ZDHHC7 and ZDHHC15.

The protein localises to the golgi apparatus. It localises to the cell projection. Its subcellular location is the growth cone. The protein resides in the axon. It is found in the cytoplasm. The protein localises to the cytosol. Functionally, exhibits microtubule-destabilizing activity, which is antagonized by STAT3. This chain is Stathmin-3 (STMN3), found in Bos taurus (Bovine).